A 238-amino-acid polypeptide reads, in one-letter code: Urease accessory protein UreG (238 aa).

The segment covering 1 to 15 has biased composition (basic and acidic residues); sequence MPPHLIDGEPHDHAH. Positions 1–27 are disordered; it reads MPPHLIDGEPHDHAHDRPKRQRTPGEP. 34 to 41 lines the GTP pocket; sequence GPVGSGKT.

The protein belongs to the SIMIBI class G3E GTPase family. UreG subfamily. In terms of assembly, homodimer. UreD, UreF and UreG form a complex that acts as a GTP-hydrolysis-dependent molecular chaperone, activating the urease apoprotein by helping to assemble the nickel containing metallocenter of UreC. The UreE protein probably delivers the nickel.

Its subcellular location is the cytoplasm. In terms of biological role, facilitates the functional incorporation of the urease nickel metallocenter. This process requires GTP hydrolysis, probably effectuated by UreG. This Nocardia farcinica (strain IFM 10152) protein is Urease accessory protein UreG.